The primary structure comprises 215 residues: Pyridoxine/pyridoxamine 5'-phosphate oxidase (215 aa).

Residues 9–12 (RKEY) and K67 contribute to the substrate site. Residues 62-67 (RIVLLK), 77-78 (YT), K84, and Q106 each bind FMN. The substrate site is built by Y124, R128, and S132. Residues 141 to 142 (QS) and W187 each bind FMN. 193-195 (RLH) is a substrate binding site. Position 197 (R197) interacts with FMN.

It belongs to the pyridoxamine 5'-phosphate oxidase family. As to quaternary structure, homodimer. It depends on FMN as a cofactor.

The enzyme catalyses pyridoxamine 5'-phosphate + O2 + H2O = pyridoxal 5'-phosphate + H2O2 + NH4(+). It carries out the reaction pyridoxine 5'-phosphate + O2 = pyridoxal 5'-phosphate + H2O2. It functions in the pathway cofactor metabolism; pyridoxal 5'-phosphate salvage; pyridoxal 5'-phosphate from pyridoxamine 5'-phosphate: step 1/1. The protein operates within cofactor metabolism; pyridoxal 5'-phosphate salvage; pyridoxal 5'-phosphate from pyridoxine 5'-phosphate: step 1/1. In terms of biological role, catalyzes the oxidation of either pyridoxine 5'-phosphate (PNP) or pyridoxamine 5'-phosphate (PMP) into pyridoxal 5'-phosphate (PLP). In Cytophaga hutchinsonii (strain ATCC 33406 / DSM 1761 / CIP 103989 / NBRC 15051 / NCIMB 9469 / D465), this protein is Pyridoxine/pyridoxamine 5'-phosphate oxidase.